Here is a 252-residue protein sequence, read N- to C-terminus: Ubiquinone/menaquinone biosynthesis C-methyltransferase UbiE (252 aa).

Residues T71, D100, 124–125 (DA), and S141 each bind S-adenosyl-L-methionine.

Belongs to the class I-like SAM-binding methyltransferase superfamily. MenG/UbiE family.

The enzyme catalyses a 2-demethylmenaquinol + S-adenosyl-L-methionine = a menaquinol + S-adenosyl-L-homocysteine + H(+). It carries out the reaction a 2-methoxy-6-(all-trans-polyprenyl)benzene-1,4-diol + S-adenosyl-L-methionine = a 5-methoxy-2-methyl-3-(all-trans-polyprenyl)benzene-1,4-diol + S-adenosyl-L-homocysteine + H(+). Its pathway is quinol/quinone metabolism; menaquinone biosynthesis; menaquinol from 1,4-dihydroxy-2-naphthoate: step 2/2. It participates in cofactor biosynthesis; ubiquinone biosynthesis. Methyltransferase required for the conversion of demethylmenaquinol (DMKH2) to menaquinol (MKH2) and the conversion of 2-polyprenyl-6-methoxy-1,4-benzoquinol (DDMQH2) to 2-polyprenyl-3-methyl-6-methoxy-1,4-benzoquinol (DMQH2). This chain is Ubiquinone/menaquinone biosynthesis C-methyltransferase UbiE, found in Caulobacter vibrioides (strain ATCC 19089 / CIP 103742 / CB 15) (Caulobacter crescentus).